A 326-amino-acid polypeptide reads, in one-letter code: Biotin synthase (326 aa).

The 225-residue stretch at 42–266 folds into the Radical SAM core domain; that stretch reads NEIQLAALLN…LMPKSYVRLA (225 aa). The [4Fe-4S] cluster site is built by cysteine 57, cysteine 61, and cysteine 64. [2Fe-2S] cluster is bound by residues cysteine 101, cysteine 132, cysteine 192, and arginine 264.

Belongs to the radical SAM superfamily. Biotin synthase family. As to quaternary structure, homodimer. Requires [4Fe-4S] cluster as cofactor. The cofactor is [2Fe-2S] cluster.

The catalysed reaction is (4R,5S)-dethiobiotin + (sulfur carrier)-SH + 2 reduced [2Fe-2S]-[ferredoxin] + 2 S-adenosyl-L-methionine = (sulfur carrier)-H + biotin + 2 5'-deoxyadenosine + 2 L-methionine + 2 oxidized [2Fe-2S]-[ferredoxin]. It functions in the pathway cofactor biosynthesis; biotin biosynthesis; biotin from 7,8-diaminononanoate: step 2/2. Functionally, catalyzes the conversion of dethiobiotin (DTB) to biotin by the insertion of a sulfur atom into dethiobiotin via a radical-based mechanism. The protein is Biotin synthase of Ehrlichia chaffeensis (strain ATCC CRL-10679 / Arkansas).